A 65-amino-acid chain; its full sequence is Small ribosomal subunit protein eS31 (65 aa).

Cys36, Cys39, Cys55, and Cys58 together coordinate Zn(2+). The C4-type zinc-finger motif lies at 36–58 (CPKCGSVMAFHKEPVPRWHCGKC).

This sequence belongs to the eukaryotic ribosomal protein eS31 family. In terms of assembly, part of the 30S ribosomal subunit. Requires Zn(2+) as cofactor.

In Pyrobaculum aerophilum (strain ATCC 51768 / DSM 7523 / JCM 9630 / CIP 104966 / NBRC 100827 / IM2), this protein is Small ribosomal subunit protein eS31.